Here is a 100-residue protein sequence, read N- to C-terminus: uncharacterized protein (100 aa).

The next 2 membrane-spanning stretches (helical) occupy residues Ile-17–Phe-37 and Met-78–Phe-98.

It is found in the endoplasmic reticulum membrane. This is an uncharacterized protein from Saccharomyces cerevisiae (strain ATCC 204508 / S288c) (Baker's yeast).